The primary structure comprises 130 residues: S-protein homolog 22 (130 aa).

The first 21 residues, 1–21 (MKYFTIFFIFFSLCMFGHVSG), serve as a signal peptide directing secretion.

It belongs to the plant self-incompatibility (S1) protein family.

The protein localises to the secreted. This Arabidopsis thaliana (Mouse-ear cress) protein is S-protein homolog 22.